The following is a 274-amino-acid chain: Large ribosomal subunit protein uL2 (274 aa).

Disordered stretches follow at residues 28–55 and 224–274; these read APHA…RHVG and VAMN…RRRK.

The protein belongs to the universal ribosomal protein uL2 family. As to quaternary structure, part of the 50S ribosomal subunit. Forms a bridge to the 30S subunit in the 70S ribosome.

Functionally, one of the primary rRNA binding proteins. Required for association of the 30S and 50S subunits to form the 70S ribosome, for tRNA binding and peptide bond formation. It has been suggested to have peptidyltransferase activity; this is somewhat controversial. Makes several contacts with the 16S rRNA in the 70S ribosome. The chain is Large ribosomal subunit protein uL2 from Pseudomonas putida (strain ATCC 47054 / DSM 6125 / CFBP 8728 / NCIMB 11950 / KT2440).